A 308-amino-acid polypeptide reads, in one-letter code: Oxygen-dependent coproporphyrinogen-III oxidase (308 aa).

S92 lines the substrate pocket. Residues H96 and H106 each coordinate a divalent metal cation. The Proton donor role is filled by H106. 108 to 110 serves as a coordination point for substrate; the sequence is NVR. H145 and H175 together coordinate a divalent metal cation. Residues 240–275 are important for dimerization; that stretch reads YVEFNLVWDRGTLFGLQTGGRTESILMSMPPLVRWE. Substrate is bound at residue 258-260; that stretch reads GGR.

Belongs to the aerobic coproporphyrinogen-III oxidase family. As to quaternary structure, homodimer. It depends on a divalent metal cation as a cofactor.

The protein resides in the cytoplasm. The catalysed reaction is coproporphyrinogen III + O2 + 2 H(+) = protoporphyrinogen IX + 2 CO2 + 2 H2O. It functions in the pathway porphyrin-containing compound metabolism; protoporphyrin-IX biosynthesis; protoporphyrinogen-IX from coproporphyrinogen-III (O2 route): step 1/1. Its function is as follows. Involved in the heme biosynthesis. Catalyzes the aerobic oxidative decarboxylation of propionate groups of rings A and B of coproporphyrinogen-III to yield the vinyl groups in protoporphyrinogen-IX. The protein is Oxygen-dependent coproporphyrinogen-III oxidase of Salmonella paratyphi A (strain ATCC 9150 / SARB42).